The sequence spans 179 residues: GTP-dependent dephospho-CoA kinase (179 aa).

The GTP site is built by Asp-55, Val-57, Asp-74, Lys-76, and Glu-128.

It belongs to the GTP-dependent DPCK family.

The enzyme catalyses 3'-dephospho-CoA + GTP = GDP + CoA + H(+). It participates in cofactor biosynthesis; coenzyme A biosynthesis. Functionally, catalyzes the GTP-dependent phosphorylation of the 3'-hydroxyl group of dephosphocoenzyme A to form coenzyme A (CoA). The polypeptide is GTP-dependent dephospho-CoA kinase (Saccharolobus islandicus (strain M.16.4 / Kamchatka #3) (Sulfolobus islandicus)).